Consider the following 189-residue polypeptide: Acireductone dioxygenase 1 (189 aa).

Fe(2+)-binding residues include H102, H104, E108, and H146. Ni(2+) is bound by residues H102, H104, E108, and H146.

It belongs to the acireductone dioxygenase (ARD) family. As to quaternary structure, monomer. Fe(2+) serves as cofactor. It depends on Ni(2+) as a cofactor.

The enzyme catalyses 1,2-dihydroxy-5-(methylsulfanyl)pent-1-en-3-one + O2 = 3-(methylsulfanyl)propanoate + CO + formate + 2 H(+). It catalyses the reaction 1,2-dihydroxy-5-(methylsulfanyl)pent-1-en-3-one + O2 = 4-methylsulfanyl-2-oxobutanoate + formate + 2 H(+). It functions in the pathway amino-acid biosynthesis; L-methionine biosynthesis via salvage pathway; L-methionine from S-methyl-5-thio-alpha-D-ribose 1-phosphate: step 5/6. In terms of biological role, catalyzes 2 different reactions between oxygen and the acireductone 1,2-dihydroxy-3-keto-5-methylthiopentene (DHK-MTPene) depending upon the metal bound in the active site. Fe-containing acireductone dioxygenase (Fe-ARD) produces formate and 2-keto-4-methylthiobutyrate (KMTB), the alpha-ketoacid precursor of methionine in the methionine recycle pathway. Ni-containing acireductone dioxygenase (Ni-ARD) produces methylthiopropionate, carbon monoxide and formate, and does not lie on the methionine recycle pathway. The polypeptide is Acireductone dioxygenase 1 (Nocardia farcinica (strain IFM 10152)).